Reading from the N-terminus, the 283-residue chain is Pseudokinase OPG198 (283 aa).

ATP is bound by residues Met-1 and Lys-30. Residues 1-283 (MESFKYCFDN…DRLRRLFIQD (283 aa)) form the Protein kinase domain.

Belongs to the protein kinase superfamily. Ser/Thr protein kinase family. Poxviruses subfamily. In terms of assembly, interacts with B1/VPK1. Interacts with host VRK1. Interacts with host VRK2.

The protein resides in the host nucleus. Both catalytically active kinases B1/VPK1 and host VRK2 repress B12 inhibitory activity in a B1/VPK1 deletion mutant strain. Pseudokinase that plays a role in viral DNA replication repression by activating the antiviral protein BANF1 and inhibiting the activity of host VRK1, a cellular modulator of BANF1. This is Pseudokinase OPG198 (OPG198) from Vaccinia virus (strain Ankara) (VACV).